The sequence spans 262 residues: Type III pantothenate kinase (262 aa).

6-13 (DVGNTNTV) is a binding site for ATP. Substrate contacts are provided by residues Y101 and 108 to 111 (GADR). D110 (proton acceptor) is an active-site residue. D130 contributes to the K(+) binding site. Position 133 (T133) interacts with ATP. Residue T186 participates in substrate binding.

Belongs to the type III pantothenate kinase family. Homodimer. Requires NH4(+) as cofactor. K(+) serves as cofactor.

The protein resides in the cytoplasm. It carries out the reaction (R)-pantothenate + ATP = (R)-4'-phosphopantothenate + ADP + H(+). It participates in cofactor biosynthesis; coenzyme A biosynthesis; CoA from (R)-pantothenate: step 1/5. In terms of biological role, catalyzes the phosphorylation of pantothenate (Pan), the first step in CoA biosynthesis. The chain is Type III pantothenate kinase from Desulforapulum autotrophicum (strain ATCC 43914 / DSM 3382 / VKM B-1955 / HRM2) (Desulfobacterium autotrophicum).